Here is a 148-residue protein sequence, read N- to C-terminus: Small ribosomal subunit protein eS12B (148 aa).

It belongs to the eukaryotic ribosomal protein eS12 family. In terms of assembly, component of the small ribosomal subunit (SSU). Mature yeast ribosomes consist of a small (40S) and a large (60S) subunit. The 40S small subunit contains 1 molecule of ribosomal RNA (18S rRNA) and at least 33 different proteins. The large 60S subunit contains 3 rRNA molecules (25S, 5.8S and 5S rRNA) and at least 46 different proteins.

It is found in the cytoplasm. Functionally, component of the ribosome, a large ribonucleoprotein complex responsible for the synthesis of proteins in the cell. The small ribosomal subunit (SSU) binds messenger RNAs (mRNAs) and translates the encoded message by selecting cognate aminoacyl-transfer RNA (tRNA) molecules. The large subunit (LSU) contains the ribosomal catalytic site termed the peptidyl transferase center (PTC), which catalyzes the formation of peptide bonds, thereby polymerizing the amino acids delivered by tRNAs into a polypeptide chain. The nascent polypeptides leave the ribosome through a tunnel in the LSU and interact with protein factors that function in enzymatic processing, targeting, and the membrane insertion of nascent chains at the exit of the ribosomal tunnel. The polypeptide is Small ribosomal subunit protein eS12B (rps1202) (Schizosaccharomyces pombe (strain 972 / ATCC 24843) (Fission yeast)).